Reading from the N-terminus, the 398-residue chain is Acetate kinase 1 (398 aa).

Position 10 (N10) interacts with Mg(2+). K17 is a binding site for ATP. R89 is a binding site for substrate. The active-site Proton donor/acceptor is D146. ATP is bound by residues 206 to 210 (HLGNG), 281 to 283 (DCR), and 329 to 333 (GIGEN). Residue E384 participates in Mg(2+) binding.

The protein belongs to the acetokinase family. Homodimer. Requires Mg(2+) as cofactor. It depends on Mn(2+) as a cofactor.

Its subcellular location is the cytoplasm. It carries out the reaction acetate + ATP = acetyl phosphate + ADP. The protein operates within metabolic intermediate biosynthesis; acetyl-CoA biosynthesis; acetyl-CoA from acetate: step 1/2. Catalyzes the formation of acetyl phosphate from acetate and ATP. Can also catalyze the reverse reaction. This Neisseria meningitidis serogroup B (strain ATCC BAA-335 / MC58) protein is Acetate kinase 1.